Reading from the N-terminus, the 400-residue chain is 3-hydroxybenzoate 6-hydroxylase (400 aa).

It belongs to the 3-hydroxybenzoate 6-hydroxylase family. Monomer. FAD serves as cofactor.

The enzyme catalyses 3-hydroxybenzoate + NADH + O2 + H(+) = 2,5-dihydroxybenzoate + NAD(+) + H2O. Catalyzes the NAD- or NADP-dependent conversion of 3-hydroxybenzoate to gentisate. The affinity of the enzyme toward NAD is twice as high as for NADP. The chain is 3-hydroxybenzoate 6-hydroxylase (nagX) from Polaromonas naphthalenivorans (strain CJ2).